The following is a 90-amino-acid chain: uncharacterized protein (90 aa).

Residues 1-18 (MSRALFAVVLAFPLIALA) form the signal peptide.

This is an uncharacterized protein from Escherichia coli (strain K12).